The primary structure comprises 282 residues: Hydroxyacylglutathione hydrolase-like protein (282 aa).

Residues histidine 54, histidine 56, aspartate 58, histidine 59, histidine 110, aspartate 134, and histidine 173 each coordinate Zn(2+).

The protein belongs to the metallo-beta-lactamase superfamily. Glyoxalase II family. It depends on Zn(2+) as a cofactor.

Hydrolase acting on ester bonds. This is Hydroxyacylglutathione hydrolase-like protein (HAGHL) from Gallus gallus (Chicken).